The sequence spans 435 residues: Nuclear distribution protein nudF 2 (435 aa).

The 33-residue stretch at 9–41 (QAEELHKSIIAYLSANGLPETTAILRKELGVTE) folds into the LisH domain. WD repeat units lie at residues 86–125 (SHRDTINCIAFHPKYSSIASGSDDCTIKIWDWELGELEVT), 128–171 (GHTR…KNIR), 175–214 (GHDHIVSAVRFIPNGSLLASASRDMDVRLWDVTNGYCVKT), 217–256 (GHTGWVRDVCASLDGRFILSTGDDMTVRLWDISAKPENKL), 280–320 (APLA…LMTL), 322–361 (GHDNWVRAIVFHPGGRYLLSVSDDKTLRCWDLSQEGKCVK), 366–396 (THGGFITCLRWAPAILKDTPTDAARALVRQI), and 397–434 (PDVAEIMKNATFEESFSDVQIRCVVATGSVDKKLQIFA).

The protein belongs to the WD repeat LIS1/nudF family. Self-associates. Interacts with nudE and dynein.

The protein localises to the cytoplasm. It is found in the cytoskeleton. The protein resides in the spindle pole. In terms of biological role, positively regulates the activity of the minus-end directed microtubule motor protein dynein. May enhance dynein-mediated microtubule sliding by targeting dynein to the microtubule plus end. Required for nuclear migration during vegetative growth as well as development. Required for retrograde early endosome (EE) transport from the hyphal tip. Required for localization of dynein to the mitotic spindle poles. Recruits additional proteins to the dynein complex at SPBs. The polypeptide is Nuclear distribution protein nudF 2 (Aspergillus clavatus (strain ATCC 1007 / CBS 513.65 / DSM 816 / NCTC 3887 / NRRL 1 / QM 1276 / 107)).